The following is a 206-amino-acid chain: uncharacterized protein (206 aa).

A signal peptide spans 1 to 18 (MSSLVLIPCALLTQGIYA).

This is an uncharacterized protein from Acanthamoeba polyphaga mimivirus (APMV).